The following is a 164-amino-acid chain: V-type proton ATPase subunit c' (164 aa).

The Vacuolar portion of the chain corresponds to 1 to 14 (MSTQLASNIYAPLY). The helical transmembrane segment at 15–37 (APFFGFAGCAAAMVLSCLGAAIG) threads the bilayer. Over 38 to 59 (TAKSGIGIAGIGTFKPELIMKS) the chain is Cytoplasmic. A helical membrane pass occupies residues 60 to 80 (LIPVVMSGILAIYGLVVAVLI). Topologically, residues 81-98 (AGNLSPTEDYTLFNGFMH) are vacuolar. Residues 99–120 (LSCGLCVGFACLSSGYAIGMVG) traverse the membrane as a helical segment. The Cytoplasmic segment spans residues 121–132 (DVGVRKYMHQPR). A helical transmembrane segment spans residues 133 to 158 (LFVGIVLILIFSEVLGLYGMIVALIL). The Vacuolar portion of the chain corresponds to 159–164 (NTRGSE).

The protein belongs to the V-ATPase proteolipid subunit family. As to quaternary structure, V-ATPase is a heteromultimeric enzyme composed of a peripheral catalytic V1 complex (components A to H) attached to an integral membrane V0 proton pore complex (components: a, c, c', c'', d, e, f and VOA1). The decameric c-ring forms the proton-conducting pore, and is composed of eight proteolipid subunits c, one subunit c' and one subunit c''.

Its subcellular location is the vacuole membrane. Proton-conducting pore forming subunit of the V0 complex of vacuolar(H+)-ATPase (V-ATPase), a multisubunit enzyme composed of a peripheral complex (V1) that hydrolyzes ATP and a membrane integral complex (V0) that translocates protons. V-ATPase is responsible for acidifying and maintaining the pH of intracellular compartments. This Saccharomyces cerevisiae (strain ATCC 204508 / S288c) (Baker's yeast) protein is V-type proton ATPase subunit c' (VMA11).